The following is a 408-amino-acid chain: Histidine--tRNA ligase (408 aa).

This sequence belongs to the class-II aminoacyl-tRNA synthetase family. As to quaternary structure, homodimer.

Its subcellular location is the cytoplasm. The enzyme catalyses tRNA(His) + L-histidine + ATP = L-histidyl-tRNA(His) + AMP + diphosphate + H(+). This Campylobacter jejuni subsp. jejuni serotype O:23/36 (strain 81-176) protein is Histidine--tRNA ligase.